The primary structure comprises 704 residues: Elongation factor G (704 aa).

The region spanning 8–291 (DKVRNIGIMA…AVVEYLASPV (284 aa)) is the tr-type G domain. GTP-binding positions include 17–24 (AHIDAGKT), 90–94 (DTPGH), and 144–147 (NKMD).

Belongs to the TRAFAC class translation factor GTPase superfamily. Classic translation factor GTPase family. EF-G/EF-2 subfamily.

The protein resides in the cytoplasm. Catalyzes the GTP-dependent ribosomal translocation step during translation elongation. During this step, the ribosome changes from the pre-translocational (PRE) to the post-translocational (POST) state as the newly formed A-site-bound peptidyl-tRNA and P-site-bound deacylated tRNA move to the P and E sites, respectively. Catalyzes the coordinated movement of the two tRNA molecules, the mRNA and conformational changes in the ribosome. This chain is Elongation factor G, found in Chlorobium limicola (strain DSM 245 / NBRC 103803 / 6330).